The sequence spans 288 residues: Acetylglutamate kinase (288 aa).

Residues 66–67 (GG), Arg88, and Asn182 contribute to the substrate site.

It belongs to the acetylglutamate kinase family. ArgB subfamily.

Its subcellular location is the cytoplasm. It carries out the reaction N-acetyl-L-glutamate + ATP = N-acetyl-L-glutamyl 5-phosphate + ADP. The protein operates within amino-acid biosynthesis; L-arginine biosynthesis; N(2)-acetyl-L-ornithine from L-glutamate: step 2/4. Functionally, catalyzes the ATP-dependent phosphorylation of N-acetyl-L-glutamate. This is Acetylglutamate kinase from Brachyspira hyodysenteriae (strain ATCC 49526 / WA1).